A 355-amino-acid polypeptide reads, in one-letter code: Mitogen-activated protein kinase HOG1 (355 aa).

The 280-residue stretch at 20-299 (YTDLQPVGMG…AEQALAHPYL (280 aa)) folds into the Protein kinase domain. ATP-binding positions include 26 to 34 (VGMGAFGLV) and K49. The active-site Proton acceptor is D141. A Phosphothreonine modification is found at T171. The short motif at 171–173 (TGY) is the TXY element. Y173 is subject to Phosphotyrosine.

It belongs to the protein kinase superfamily. Ser/Thr protein kinase family. MAP kinase subfamily. HOG1 sub-subfamily. The cofactor is Mg(2+). Post-translationally, dually phosphorylated on Thr-171 and Tyr-173, which activates the enzyme.

It is found in the cytoplasm. It localises to the nucleus. The enzyme catalyses L-seryl-[protein] + ATP = O-phospho-L-seryl-[protein] + ADP + H(+). The catalysed reaction is L-threonyl-[protein] + ATP = O-phospho-L-threonyl-[protein] + ADP + H(+). Its activity is regulated as follows. Activated by tyrosine and threonine phosphorylation. Proline-directed serine/threonine-protein kinase involved in a signal transduction pathway that is activated by changes in the osmolarity of the extracellular environment. Controls osmotic regulation of transcription of target genes. In Phaeosphaeria nodorum (strain SN15 / ATCC MYA-4574 / FGSC 10173) (Glume blotch fungus), this protein is Mitogen-activated protein kinase HOG1 (HOG1).